Reading from the N-terminus, the 524-residue chain is MLGMSLREAAAVLRLGQVKPTELCQKCLSLIKETSFLNAYITITEDIALKQAAEADKRFAQGKPLGELDGIPIAIKDNFSTAGIETTCASRMLKGYVAPYNATVVQKLFDQGAVLMGKTNLDEFGMGSGSTDSIFGPVRNPWSYSRSYIEKRPISHHAAKDDSDWVIAGGSSGGSACAVSAGTCYLAIGSDTGGSTRNPASHCGVVGLKPTYGLVSRHGLIPLVNSMDIPGILTRCVDDAATVLGMLAGHDLYDSTTVQDPFQPFSLPETIDLSNLCIGIPKEYHAPGLSTEILSLWSKTADLLEKAGAKVMEVSLPHTPYSIVCYHVLCTAEVASNMARFDGLEYGHRSDIDDSTEAMYAATRREGFNDVVRGRILSGNYFLLKQNYEKYFVKAQKVRRLIADDFVKVFNSGVHVLLTPTTLGDAAPYLEFIQEDNRTRSAEEDVFTQCTNMAGLPAVTVPAGLSSRGLPLGLQFIGRAFCERQLLTVAKWCEKQMDFSPLQFNRDLGNGSIVLQYSKSASFV.

Active-site charge relay system residues include Lys-76 and Ser-171. Residue Ser-195 is the Acyl-ester intermediate of the active site.

It belongs to the amidase family. GatA subfamily. As to quaternary structure, subunit of the heterotrimeric GatCAB amidotransferase (AdT) complex, composed of A (qrsl1), B (gatb) and C (gatc) subunits.

Its subcellular location is the mitochondrion. It catalyses the reaction L-glutamyl-tRNA(Gln) + L-glutamine + ATP + H2O = L-glutaminyl-tRNA(Gln) + L-glutamate + ADP + phosphate + H(+). Allows the formation of correctly charged Gln-tRNA(Gln) through the transamidation of misacylated Glu-tRNA(Gln) in the mitochondria. The reaction takes place in the presence of glutamine and ATP through an activated gamma-phospho-Glu-tRNA(Gln). The polypeptide is Glutamyl-tRNA(Gln) amidotransferase subunit A, mitochondrial (qrsl1) (Xenopus laevis (African clawed frog)).